The chain runs to 134 residues: Large ribosomal subunit protein uL22 (134 aa).

It belongs to the universal ribosomal protein uL22 family. Part of the 50S ribosomal subunit.

Its function is as follows. This protein binds specifically to 23S rRNA; its binding is stimulated by other ribosomal proteins, e.g. L4, L17, and L20. It is important during the early stages of 50S assembly. It makes multiple contacts with different domains of the 23S rRNA in the assembled 50S subunit and ribosome. In terms of biological role, the globular domain of the protein is located near the polypeptide exit tunnel on the outside of the subunit, while an extended beta-hairpin is found that lines the wall of the exit tunnel in the center of the 70S ribosome. This chain is Large ribosomal subunit protein uL22, found in Karelsulcia muelleri (strain GWSS) (Sulcia muelleri).